We begin with the raw amino-acid sequence, 174 residues long: ATP-dependent protease subunit HslV (174 aa).

Residue Thr-2 is part of the active site. Na(+)-binding residues include Ala-156, Cys-159, and Thr-162.

Belongs to the peptidase T1B family. HslV subfamily. As to quaternary structure, a double ring-shaped homohexamer of HslV is capped on each side by a ring-shaped HslU homohexamer. The assembly of the HslU/HslV complex is dependent on binding of ATP.

Its subcellular location is the cytoplasm. It catalyses the reaction ATP-dependent cleavage of peptide bonds with broad specificity.. Allosterically activated by HslU binding. In terms of biological role, protease subunit of a proteasome-like degradation complex believed to be a general protein degrading machinery. This chain is ATP-dependent protease subunit HslV, found in Agrobacterium fabrum (strain C58 / ATCC 33970) (Agrobacterium tumefaciens (strain C58)).